Reading from the N-terminus, the 138-residue chain is Nucleoside diphosphate kinase (138 aa).

ATP is bound by residues Lys-9, Phe-57, Arg-85, Thr-91, Arg-102, and Asn-112. Residue His-115 is the Pros-phosphohistidine intermediate of the active site.

It belongs to the NDK family. In terms of assembly, homotetramer. It depends on Mg(2+) as a cofactor.

The protein resides in the cytoplasm. The enzyme catalyses a 2'-deoxyribonucleoside 5'-diphosphate + ATP = a 2'-deoxyribonucleoside 5'-triphosphate + ADP. The catalysed reaction is a ribonucleoside 5'-diphosphate + ATP = a ribonucleoside 5'-triphosphate + ADP. In terms of biological role, major role in the synthesis of nucleoside triphosphates other than ATP. The ATP gamma phosphate is transferred to the NDP beta phosphate via a ping-pong mechanism, using a phosphorylated active-site intermediate. In Exiguobacterium sibiricum (strain DSM 17290 / CCUG 55495 / CIP 109462 / JCM 13490 / 255-15), this protein is Nucleoside diphosphate kinase.